A 525-amino-acid polypeptide reads, in one-letter code: Protein-export membrane protein SecD (525 aa).

Helical transmembrane passes span 16-36, 368-388, 395-415, 421-441, 466-486, and 488-508; these read VLLL…KGLT, QAII…YFHY, IPVA…AALI, LPSI…QIVI, AFFI…FLLV, and FVGT…IGVL.

This sequence belongs to the SecD/SecF family. SecD subfamily. As to quaternary structure, part of the protein translocation apparatus. Forms a complex with SecF.

The protein localises to the cell membrane. In terms of biological role, involved in protein export. The protein is Protein-export membrane protein SecD of Thermococcus gammatolerans (strain DSM 15229 / JCM 11827 / EJ3).